We begin with the raw amino-acid sequence, 125 residues long: Cystatin-like cysteine protease inhibitor EPIC2B (125 aa).

An N-terminal signal peptide occupies residues 1 to 21 (MSFLRPTLALLAVTALVTTSG). Asn-45 carries N-linked (GlcNAc...) asparagine glycosylation. The short motif at 68-72 (QVVSG) is the Secondary area of contact element.

This sequence belongs to the cystatin family. As to quaternary structure, interacts with the host papain-like cysteine protease PIP1. Interacts with the host papain-like cysteine protease RCR3. Interacts with the host papain-like cysteine protease C14.

The protein localises to the secreted. Secreted effector that interacts with and inhibits the pathogenesis-related papain-like cysteine proteases C14, PIP1 and RCR3 of host plants. Inhibition of host proteases by a pathogen extracellular protease inhibitor forms a specific type of defense-counterdefense mechanism between plants and microbial pathogens. The sequence is that of Cystatin-like cysteine protease inhibitor EPIC2B from Phytophthora infestans (Potato late blight agent).